A 952-amino-acid polypeptide reads, in one-letter code: Valine--tRNA ligase (952 aa).

The short motif at 45–55 (PNVTGSLHMGH) is the 'HIGH' region element. Positions 571–575 (KMSKS) match the 'KMSKS' region motif. Lysine 574 is an ATP binding site. A coiled-coil region spans residues 894-950 (KEIAKADADIARVDLKLADQNFIANAPGEIVEDEKEKREAAAARKAKFVEALERLKA).

This sequence belongs to the class-I aminoacyl-tRNA synthetase family. ValS type 1 subfamily. As to quaternary structure, monomer.

It localises to the cytoplasm. The enzyme catalyses tRNA(Val) + L-valine + ATP = L-valyl-tRNA(Val) + AMP + diphosphate. Functionally, catalyzes the attachment of valine to tRNA(Val). As ValRS can inadvertently accommodate and process structurally similar amino acids such as threonine, to avoid such errors, it has a 'posttransfer' editing activity that hydrolyzes mischarged Thr-tRNA(Val) in a tRNA-dependent manner. The polypeptide is Valine--tRNA ligase (Nitrobacter winogradskyi (strain ATCC 25391 / DSM 10237 / CIP 104748 / NCIMB 11846 / Nb-255)).